A 249-amino-acid polypeptide reads, in one-letter code: ATP synthase subunit a (249 aa).

6 consecutive transmembrane segments (helical) span residues serine 30–glycine 50, phenylalanine 84–isoleucine 104, leucine 114–tyrosine 134, isoleucine 143–phenylalanine 163, leucine 196–isoleucine 216, and leucine 221–leucine 241.

This sequence belongs to the ATPase A chain family. As to quaternary structure, F-type ATPases have 2 components, CF(1) - the catalytic core - and CF(0) - the membrane proton channel. CF(1) has five subunits: alpha(3), beta(3), gamma(1), delta(1), epsilon(1). CF(0) has four main subunits: a, b, b' and c.

It localises to the cell inner membrane. Its function is as follows. Key component of the proton channel; it plays a direct role in the translocation of protons across the membrane. The sequence is that of ATP synthase subunit a from Rhodopseudomonas palustris (strain BisB18).